The chain runs to 455 residues: MSQRKYFGTDGIRGHVGLSNINPEFVLKLGWAVGCVLANGARKKVVIGKDTRVSGYMLESALEAGLSAAGVDVALLGPMPTPGIAYLTQTLRANAGIVISASHNLFEDNGIKFFSADGGKLPDSVELAIEAQLEKQLQTVPSAKLGKATRINDAAGRYIEFCKSTIPSLSRLSNLKIVVDCANGATYHIAPNVFSELGADVVPIGIKPDGFNINQECGSTAPELLREKVIAVGADIGIGLDGDGDRVILVDSLGNLVDGDQIIYIIAKDRHQRGVLHGGVVGTLMSNYGLELAITSLGVPFQRSKVGDRYVLEMLREKDWKIGGETSGHIVCLDKTTTGDGIVAALQVLSIMVKQNKALHELTAGIQLLPQTLVNLKTNNAALLASNPDVIQAVKNLEKHLNGEGRVLLRPSGTEPLLRVMVEGANASIVKQQAQMLCDDISQIDKKMTESLPST.

Catalysis depends on Ser102, which acts as the Phosphoserine intermediate. Mg(2+) is bound by residues Ser102, Asp241, Asp243, and Asp245. Ser102 is subject to Phosphoserine.

The protein belongs to the phosphohexose mutase family. The cofactor is Mg(2+). Post-translationally, activated by phosphorylation.

It catalyses the reaction alpha-D-glucosamine 1-phosphate = D-glucosamine 6-phosphate. In terms of biological role, catalyzes the conversion of glucosamine-6-phosphate to glucosamine-1-phosphate. The polypeptide is Phosphoglucosamine mutase (Legionella pneumophila (strain Lens)).